The primary structure comprises 182 residues: Adenine phosphoribosyltransferase (182 aa).

The protein belongs to the purine/pyrimidine phosphoribosyltransferase family. Homodimer.

The protein localises to the cytoplasm. It catalyses the reaction AMP + diphosphate = 5-phospho-alpha-D-ribose 1-diphosphate + adenine. The protein operates within purine metabolism; AMP biosynthesis via salvage pathway; AMP from adenine: step 1/1. Catalyzes a salvage reaction resulting in the formation of AMP, that is energically less costly than de novo synthesis. This is Adenine phosphoribosyltransferase from Renibacterium salmoninarum (strain ATCC 33209 / DSM 20767 / JCM 11484 / NBRC 15589 / NCIMB 2235).